Consider the following 197-residue polypeptide: Phosphoheptose isomerase (197 aa).

Positions 34–196 (MVHCLLSGNK…DHTLFPQDEQ (163 aa)) constitute an SIS domain. 49 to 51 (NGG) is a binding site for substrate. Zn(2+) is bound by residues H58 and E62. Residues E62, 91 to 92 (ND), 117 to 119 (STS), S122, and Q172 each bind substrate. Zn(2+) is bound by residues Q172 and H180.

The protein belongs to the SIS family. GmhA subfamily. In terms of assembly, homotetramer. It depends on Zn(2+) as a cofactor.

It localises to the cytoplasm. It catalyses the reaction 2 D-sedoheptulose 7-phosphate = D-glycero-alpha-D-manno-heptose 7-phosphate + D-glycero-beta-D-manno-heptose 7-phosphate. It participates in carbohydrate biosynthesis; D-glycero-D-manno-heptose 7-phosphate biosynthesis; D-glycero-alpha-D-manno-heptose 7-phosphate and D-glycero-beta-D-manno-heptose 7-phosphate from sedoheptulose 7-phosphate: step 1/1. Catalyzes the isomerization of sedoheptulose 7-phosphate in D-glycero-D-manno-heptose 7-phosphate. The protein is Phosphoheptose isomerase of Shewanella halifaxensis (strain HAW-EB4).